The primary structure comprises 173 residues: Shikimate kinase 1 (173 aa).

14 to 19 (GAGKST) contacts ATP. Serine 18 provides a ligand contact to Mg(2+). Residues aspartate 36, arginine 60, and glycine 82 each coordinate substrate. An ATP-binding site is contributed by arginine 120. Substrate is bound at residue arginine 140. Glutamine 157 is a binding site for ATP.

The protein belongs to the shikimate kinase family. In terms of assembly, monomer. Requires Mg(2+) as cofactor.

It localises to the cytoplasm. The catalysed reaction is shikimate + ATP = 3-phosphoshikimate + ADP + H(+). It functions in the pathway metabolic intermediate biosynthesis; chorismate biosynthesis; chorismate from D-erythrose 4-phosphate and phosphoenolpyruvate: step 5/7. In terms of biological role, catalyzes the specific phosphorylation of the 3-hydroxyl group of shikimic acid using ATP as a cosubstrate. This is Shikimate kinase 1 from Sodalis glossinidius (strain morsitans).